The primary structure comprises 548 residues: Membrane protein insertase YidC (548 aa).

A helical transmembrane segment spans residues 6–26 (NLLVIALLFVSFMIWQAWEQD). The interval 28-56 (NPQPQTQQTTQTTTTAAGSAADQGVPASG) is disordered. A compositionally biased stretch (low complexity) spans 29–42 (PQPQTQQTTQTTTT). 4 consecutive transmembrane segments (helical) span residues 350–370 (FVGN…GIMY), 424–444 (FPLI…MGSI), 458–478 (LSAQ…MFFI), and 499–519 (PVIF…YYIV).

The protein belongs to the OXA1/ALB3/YidC family. Type 1 subfamily. In terms of assembly, interacts with the Sec translocase complex via SecD. Specifically interacts with transmembrane segments of nascent integral membrane proteins during membrane integration.

It is found in the cell inner membrane. Its function is as follows. Required for the insertion and/or proper folding and/or complex formation of integral membrane proteins into the membrane. Involved in integration of membrane proteins that insert both dependently and independently of the Sec translocase complex, as well as at least some lipoproteins. Aids folding of multispanning membrane proteins. The chain is Membrane protein insertase YidC from Salmonella heidelberg (strain SL476).